A 285-amino-acid polypeptide reads, in one-letter code: Acetylglutamate kinase (285 aa).

Residues 64–65, Arg-86, and Asn-180 each bind substrate; that span reads GG.

The protein belongs to the acetylglutamate kinase family. ArgB subfamily.

Its subcellular location is the plastid. It localises to the chloroplast. The enzyme catalyses N-acetyl-L-glutamate + ATP = N-acetyl-L-glutamyl 5-phosphate + ADP. Its pathway is amino-acid biosynthesis; L-arginine biosynthesis; N(2)-acetyl-L-ornithine from L-glutamate: step 2/4. Catalyzes the ATP-dependent phosphorylation of N-acetyl-L-glutamate. The sequence is that of Acetylglutamate kinase from Gracilaria tenuistipitata var. liui (Red alga).